The following is a 98-amino-acid chain: Putative septation protein SpoVG (98 aa).

This sequence belongs to the SpoVG family.

Its function is as follows. Essential for sporulation. Interferes with or is a negative regulator of the pathway leading to asymmetric septation. This is Putative septation protein SpoVG from Shouchella clausii (strain KSM-K16) (Alkalihalobacillus clausii).